The chain runs to 138 residues: ATP synthase epsilon chain (138 aa).

Belongs to the ATPase epsilon chain family. As to quaternary structure, F-type ATPases have 2 components, CF(1) - the catalytic core - and CF(0) - the membrane proton channel. CF(1) has five subunits: alpha(3), beta(3), gamma(1), delta(1), epsilon(1). CF(0) has three main subunits: a, b and c.

The protein resides in the cell membrane. Produces ATP from ADP in the presence of a proton gradient across the membrane. This Polynucleobacter asymbioticus (strain DSM 18221 / CIP 109841 / QLW-P1DMWA-1) (Polynucleobacter necessarius subsp. asymbioticus) protein is ATP synthase epsilon chain.